Here is a 193-residue protein sequence, read N- to C-terminus: Xanthine phosphoribosyltransferase (193 aa).

Residues L20 and T27 each contribute to the xanthine site. 128-132 (ANGQA) is a binding site for 5-phospho-alpha-D-ribose 1-diphosphate. Residue K156 coordinates xanthine.

This sequence belongs to the purine/pyrimidine phosphoribosyltransferase family. Xpt subfamily. Homodimer.

The protein resides in the cytoplasm. It catalyses the reaction XMP + diphosphate = xanthine + 5-phospho-alpha-D-ribose 1-diphosphate. It participates in purine metabolism; XMP biosynthesis via salvage pathway; XMP from xanthine: step 1/1. Its function is as follows. Converts the preformed base xanthine, a product of nucleic acid breakdown, to xanthosine 5'-monophosphate (XMP), so it can be reused for RNA or DNA synthesis. The polypeptide is Xanthine phosphoribosyltransferase (Streptococcus pyogenes serotype M49 (strain NZ131)).